The sequence spans 478 residues: Dihydrolipoyl dehydrogenase (478 aa).

Residues Glu-36–Cys-45, Lys-54, and Ala-117 each bind FAD. An intrachain disulfide couples Cys-45 to Cys-50. NAD(+) contacts are provided by residues Gly-183–Ile-187, Glu-206, Val-239, and Ala-270–Arg-273. Positions 313 and 321 each coordinate FAD. His-445 serves as the catalytic Proton acceptor.

This sequence belongs to the class-I pyridine nucleotide-disulfide oxidoreductase family. As to quaternary structure, homodimer. Requires FAD as cofactor.

The protein localises to the cytoplasm. The enzyme catalyses N(6)-[(R)-dihydrolipoyl]-L-lysyl-[protein] + NAD(+) = N(6)-[(R)-lipoyl]-L-lysyl-[protein] + NADH + H(+). Functionally, lipoamide dehydrogenase is a component of the alpha-ketoacid dehydrogenase complexes. In Haemophilus influenzae (strain ATCC 51907 / DSM 11121 / KW20 / Rd), this protein is Dihydrolipoyl dehydrogenase (lpdA).